Reading from the N-terminus, the 199-residue chain is Charged multivesicular body protein 1b (199 aa).

Coiled coils occupy residues 8-42 and 178-199; these read LFNL…AIQK and TSVA…RDQV. Residues 167-199 form a disordered region; it reads ELPQGQTGSVGTSVASTEQDELSQRLARLRDQV. Positions 170–183 are enriched in polar residues; the sequence is QGQTGSVGTSVAST. The short motif at 186-196 is the MIT-interacting motif element; that stretch reads DELSQRLARLR.

The protein belongs to the SNF7 family. Probable peripherally associated component of the endosomal sorting required for transport complex III (ESCRT-III).

The protein localises to the cytoplasm. Its subcellular location is the cytosol. It is found in the endosome. The protein resides in the late endosome membrane. Probable peripherally associated component of the endosomal sorting required for transport complex III (ESCRT-III) which is involved in multivesicular bodies (MVBs) formation and sorting of endosomal cargo proteins into MVBs. MVBs contain intraluminal vesicles (ILVs) that are generated by invagination and scission from the limiting membrane of the endosome and mostly are delivered to lysosomes enabling degradation of membrane proteins, such as stimulated growth factor receptors, lysosomal enzymes and lipids. The sequence is that of Charged multivesicular body protein 1b (chmp1b) from Xenopus laevis (African clawed frog).